Consider the following 130-residue polypeptide: Small ribosomal subunit protein uS8A (130 aa).

Belongs to the universal ribosomal protein uS8 family. In terms of assembly, component of the small ribosomal subunit (SSU). Mature yeast ribosomes consist of a small (40S) and a large (60S) subunit. The 40S small subunit contains 1 molecule of ribosomal RNA (18S rRNA) and at least 33 different proteins. The large 60S subunit contains 3 rRNA molecules (25S, 5.8S and 5S rRNA) and at least 46 different proteins.

The protein localises to the cytoplasm. Its subcellular location is the nucleus. Component of the ribosome, a large ribonucleoprotein complex responsible for the synthesis of proteins in the cell. The small ribosomal subunit (SSU) binds messenger RNAs (mRNAs) and translates the encoded message by selecting cognate aminoacyl-transfer RNA (tRNA) molecules. The large subunit (LSU) contains the ribosomal catalytic site termed the peptidyl transferase center (PTC), which catalyzes the formation of peptide bonds, thereby polymerizing the amino acids delivered by tRNAs into a polypeptide chain. The nascent polypeptides leave the ribosome through a tunnel in the LSU and interact with protein factors that function in enzymatic processing, targeting, and the membrane insertion of nascent chains at the exit of the ribosomal tunnel. This is Small ribosomal subunit protein uS8A (rps2201) from Schizosaccharomyces pombe (strain 972 / ATCC 24843) (Fission yeast).